The primary structure comprises 633 residues: ATP-dependent RNA helicase mss116, mitochondrial (633 aa).

A mitochondrion-targeting transit peptide spans 1–32; it reads MKTGRTRPLRVFDILVPPWPPTVPHRIKLPRG. The short motif at 38–66 is the Q motif element; that stretch reads EFYSAITRNWNKLKGLKNCWQIWKDVQEI. In terms of domain architecture, Helicase ATP-binding spans 70–248; it reads IRKYQGESTV…TAEKLSNIQT (179 aa). Residue 83 to 90 participates in ATP binding; sequence PGNNDGAH. Positions 195–198 match the DEAD box motif; it reads RPLE. The Helicase C-terminal domain occupies 262–429; it reads FLADVKRILQ…NVDLVIQVGL (168 aa). Residues 567-633 are disordered; that stretch reads FNYATGNDLN…GGRGGKPRAA (67 aa).

This sequence belongs to the DEAD box helicase family. DDX18/HAS1 subfamily.

The protein resides in the mitochondrion matrix. It catalyses the reaction ATP + H2O = ADP + phosphate + H(+). In terms of biological role, ATP-dependent RNA helicase required for mitochondrial splicing of group I and II introns. Also required for efficient mitochondrial translation. This chain is ATP-dependent RNA helicase mss116, mitochondrial (mss116), found in Aspergillus oryzae (strain ATCC 42149 / RIB 40) (Yellow koji mold).